A 106-amino-acid chain; its full sequence is Glutaredoxin-1 (106 aa).

The residue at position 2 (A2) is an N-acetylalanine. A Glutaredoxin domain is found at 3 to 106; the sequence is QAFVNSKIQP…TRLKQMGALQ (104 aa). K9 is subject to N6-succinyllysine. Disulfide bonds link C23–C26 and C79–C83.

This sequence belongs to the glutaredoxin family.

The protein localises to the cytoplasm. Functionally, has a glutathione-disulfide oxidoreductase activity in the presence of NADPH and glutathione reductase. Reduces low molecular weight disulfides and proteins. The polypeptide is Glutaredoxin-1 (GLRX) (Bos taurus (Bovine)).